The primary structure comprises 261 residues: MNGLISQACGSHRPRRPSSLGAVAILIAATLFATVVAGCGKKPTTASSPSPGSPSPEAQQILQDSSKATKGLHSVHVVVTVNNLSTLPFESVDADVTNQPQGNGQAVGNAKVRMKPNTPVVATEFLVTNKTMYTKRGGDYVSVGPAEKIYDPGIILDKDRGLGAVVGQVQNPTIQGRDAIDGLATVKVSGTIDAAVIDPIVPQLGKGGGRLPITLWIVDTNASTPAPAANLVRMVIDKDQGNVDITLSNWGAPVTIPNPAG.

The first 38 residues, 1 to 38 (MNGLISQACGSHRPRRPSSLGAVAILIAATLFATVVAG), serve as a signal peptide directing secretion. Cys-39 is lipidated: N-palmitoyl cysteine. A lipid anchor (S-diacylglycerol cysteine) is attached at Cys-39. The disordered stretch occupies residues 42 to 61 (KPTTASSPSPGSPSPEAQQI).

Belongs to the LppX/LprAFG lipoprotein family. As to quaternary structure, monomer. In terms of processing, modified by Lgt on Cys-39 with an S-linked diacylglycerol with a mixture of C16, C18 and C19 fatty acids (palmitic, stearic and tuberculostearic acid respectively), signal peptide is removed by LspA, modified by Lnt with an amide-linked mixture of C16 and C19 fatty acids.

It is found in the cell membrane. In terms of biological role, might be involved in transporting short diacylated glycolipids to the cell outer membrane. Binds glycolipids that contain a diacylated glycerophosphate or a diacylated phosphatidylinositol moiety with C14 and C16 chains (upon overexpression in M.smegmatis; M.smegmatis does not encode this gene). Overexpression in M.smegmatis increases the cell wall glycolipid LAM/LM ratio (lipoarabinomannan/lipomannan), suggesting perhaps this protein is involved in the preferential translocation of diacylated LAM to the outer cell membrane. Overexpressing M.smegmatis cells adhere less well to hexadecane droplets, indicating decrease in the hydrophobicity of the cell surface, and have a slightly increased resistance to the antibiotic ethambutol. The protein is Putative diacylated glycolipid transporter LprF (lprF) of Mycobacterium bovis (strain ATCC BAA-935 / AF2122/97).